The following is a 182-amino-acid chain: MSDQVLSALEHFFLRWQRDGEARRGLPLCEWEADWRSPCELDEPREGRVAWRPHQRQQAADFAAMANALELVLHPAAQALFGHWFSRPIPCSYKGLRLEIILPWNEADLNLLRENLIGHLLMLRKLKRTPSLFIATTRNEMTLVSLDNESGQVWLEWLDSGRRLTLAPSLPAFLERLETLPH.

It belongs to the Syd family.

Its subcellular location is the cell inner membrane. In terms of biological role, interacts with the SecY protein in vivo. May bind preferentially to an uncomplexed state of SecY, thus functioning either as a chelating agent for excess SecY in the cell or as a regulatory factor that negatively controls the translocase function. The sequence is that of Protein Syd from Aeromonas salmonicida (strain A449).